The primary structure comprises 67 residues: Conotoxin Cl6.8 (67 aa).

The first 22 residues, 1 to 22 (MKVTAVLMVAVLVLTACQLTTA), serve as a signal peptide directing secretion. Residues 23–39 (NTTDYVRRILARKSTMS) constitute a propeptide that is removed on maturation. Cystine bridges form between cysteine 43–cysteine 58, cysteine 50–cysteine 62, and cysteine 57–cysteine 66. A Cysteine amide modification is found at cysteine 66.

It belongs to the conotoxin O1 superfamily. Expressed by the venom duct.

The protein localises to the secreted. In Californiconus californicus (California cone), this protein is Conotoxin Cl6.8.